Reading from the N-terminus, the 100-residue chain is uncharacterized protein (100 aa).

The first 17 residues, 1–17 (MIMKYFCTVMIAIALVG), serve as a signal peptide directing secretion. Residue cysteine 18 is the site of N-palmitoyl cysteine attachment. The S-diacylglycerol cysteine moiety is linked to residue cysteine 18.

Its subcellular location is the cell membrane. This is an uncharacterized protein from Salmonella typhi.